The chain runs to 67 residues: Probable Sec-independent protein translocase protein TatE (67 aa).

A helical membrane pass occupies residues Ile-4–Gly-21. Residues Asn-44–Glu-67 form a disordered region.

This sequence belongs to the TatA/E family. TatE subfamily.

Its subcellular location is the cell inner membrane. Part of the twin-arginine translocation (Tat) system that transports large folded proteins containing a characteristic twin-arginine motif in their signal peptide across membranes. TatE shares overlapping functions with TatA. This is Probable Sec-independent protein translocase protein TatE from Cronobacter sakazakii (strain ATCC BAA-894) (Enterobacter sakazakii).